The following is a 357-amino-acid chain: Ribosomal RNA large subunit methyltransferase M (357 aa).

S-adenosyl-L-methionine contacts are provided by residues S183, 216–219 (APGG), D235, D255, and D271. K300 acts as the Proton acceptor in catalysis.

Belongs to the class I-like SAM-binding methyltransferase superfamily. RNA methyltransferase RlmE family. RlmM subfamily. As to quaternary structure, monomer.

The protein localises to the cytoplasm. It carries out the reaction cytidine(2498) in 23S rRNA + S-adenosyl-L-methionine = 2'-O-methylcytidine(2498) in 23S rRNA + S-adenosyl-L-homocysteine + H(+). In terms of biological role, catalyzes the 2'-O-methylation at nucleotide C2498 in 23S rRNA. The chain is Ribosomal RNA large subunit methyltransferase M from Pseudomonas syringae pv. syringae (strain B728a).